Consider the following 430-residue polypeptide: Transcription factor iws-1 (430 aa).

Residues 1–14 are compositionally biased toward low complexity; that stretch reads MSDAASPAGSPAAE. The interval 1 to 153 is disordered; sequence MSDAASPAGS…EENLTPDERR (153 aa). A compositionally biased stretch (basic and acidic residues) spans 15-33; that stretch reads PTEHRDEDQVNETHQDDGS. Residues 52 to 63 are compositionally biased toward acidic residues; sequence VLSEIDENEFGD. Over residues 95 to 104 the composition is skewed to basic residues; the sequence is KEGRRPKKRS. The segment covering 124-137 has biased composition (basic and acidic residues); sequence VRAEGERRARKEVE. A TFIIS N-terminal domain is found at 244-321; sequence QSVRYFLEPL…GEWSRLILKR (78 aa). The tract at residues 402-430 is disordered; it reads GQAPTDHRPIGHSGHEAFRRMTQKGKGKR. Basic and acidic residues predominate over residues 406-420; that stretch reads TDHRPIGHSGHEAFR.

It belongs to the IWS1 family.

The protein localises to the nucleus. In terms of biological role, transcription factor involved in RNA polymerase II transcription regulation. May function in both SPT15/TBP post-recruitment and recruitment steps of transcription. This is Transcription factor iws-1 (iws-1) from Neurospora crassa (strain ATCC 24698 / 74-OR23-1A / CBS 708.71 / DSM 1257 / FGSC 987).